A 294-amino-acid polypeptide reads, in one-letter code: Cytidine deaminase (294 aa).

2 CMP/dCMP-type deaminase domains span residues 48 to 168 (DEDA…FGPK) and 186 to 294 (VSGD…VLLG). A substrate-binding site is contributed by 89–91 (NME). H102 contacts Zn(2+). Catalysis depends on E104, which acts as the Proton donor. Zn(2+)-binding residues include C129 and C132.

It belongs to the cytidine and deoxycytidylate deaminase family. In terms of assembly, homodimer. Requires Zn(2+) as cofactor.

The catalysed reaction is cytidine + H2O + H(+) = uridine + NH4(+). It carries out the reaction 2'-deoxycytidine + H2O + H(+) = 2'-deoxyuridine + NH4(+). This enzyme scavenges exogenous and endogenous cytidine and 2'-deoxycytidine for UMP synthesis. This Klebsiella pneumoniae (strain 342) protein is Cytidine deaminase.